The primary structure comprises 259 residues: Zinc import ATP-binding protein ZnuC (259 aa).

In terms of domain architecture, ABC transporter spans 6–223; sequence VTVQSVSVTL…PAYHELFGPG (218 aa). 38 to 45 serves as a coordination point for ATP; it reads GPNGAGKS. A disordered region spans residues 230-259; the sequence is ALYTHDHDHDHDLHGNATHSHDHNGPCNHD. The segment covering 233–259 has biased composition (basic and acidic residues); it reads THDHDHDHDLHGNATHSHDHNGPCNHD.

Belongs to the ABC transporter superfamily. Zinc importer (TC 3.A.1.15.5) family. As to quaternary structure, the complex is composed of two ATP-binding proteins (ZnuC), two transmembrane proteins (ZnuB) and a solute-binding protein (ZnuA).

It localises to the cell inner membrane. It carries out the reaction Zn(2+)(out) + ATP(in) + H2O(in) = Zn(2+)(in) + ADP(in) + phosphate(in) + H(+)(in). Its function is as follows. Part of the ABC transporter complex ZnuABC involved in zinc import. Responsible for energy coupling to the transport system. This is Zinc import ATP-binding protein ZnuC from Alcanivorax borkumensis (strain ATCC 700651 / DSM 11573 / NCIMB 13689 / SK2).